The chain runs to 177 residues: ATP synthase subunit delta (177 aa).

It belongs to the ATPase delta chain family. As to quaternary structure, F-type ATPases have 2 components, F(1) - the catalytic core - and F(0) - the membrane proton channel. F(1) has five subunits: alpha(3), beta(3), gamma(1), delta(1), epsilon(1). F(0) has three main subunits: a(1), b(2) and c(10-14). The alpha and beta chains form an alternating ring which encloses part of the gamma chain. F(1) is attached to F(0) by a central stalk formed by the gamma and epsilon chains, while a peripheral stalk is formed by the delta and b chains.

It is found in the cell inner membrane. Functionally, f(1)F(0) ATP synthase produces ATP from ADP in the presence of a proton or sodium gradient. F-type ATPases consist of two structural domains, F(1) containing the extramembraneous catalytic core and F(0) containing the membrane proton channel, linked together by a central stalk and a peripheral stalk. During catalysis, ATP synthesis in the catalytic domain of F(1) is coupled via a rotary mechanism of the central stalk subunits to proton translocation. This protein is part of the stalk that links CF(0) to CF(1). It either transmits conformational changes from CF(0) to CF(1) or is implicated in proton conduction. The polypeptide is ATP synthase subunit delta (Flavobacterium psychrophilum (strain ATCC 49511 / DSM 21280 / CIP 103535 / JIP02/86)).